The sequence spans 354 residues: Ornithine transcarbamylase, mitochondrial (354 aa).

The N-terminal 32 residues, 1 to 32, are a transit peptide targeting the mitochondrion; that stretch reads MLFNLRILLNNAAFRNGHNFMVRNFRCGQPLQ. Lysine 70 carries the post-translational modification N6-acetyllysine; alternate. N6-succinyllysine; alternate is present on lysine 70. Lysine 80 bears the N6-succinyllysine mark. Lysine 88 is subject to N6-acetyllysine; alternate. Lysine 88 is modified (N6-succinyllysine; alternate). 90–93 is a binding site for carbamoyl phosphate; it reads STRT. Serine 133 carries the post-translational modification Phosphoserine. Arginine 141 is a carbamoyl phosphate binding site. Lysine 144 bears the N6-acetyllysine; alternate mark. The residue at position 144 (lysine 144) is an N6-succinyllysine; alternate. Residues histidine 168 and glutamine 171 each coordinate carbamoyl phosphate. Position 199 (asparagine 199) interacts with L-ornithine. N6-acetyllysine; alternate occurs at positions 221, 231, and 238. N6-succinyllysine; alternate is present on residues lysine 221, lysine 231, and lysine 238. N6-acetyllysine is present on lysine 243. L-ornithine contacts are provided by aspartate 263, serine 267, and methionine 268. N6-succinyllysine occurs at positions 274 and 289. Residue lysine 292 is modified to N6-acetyllysine; alternate. Position 292 is an N6-succinyllysine; alternate (lysine 292). Cysteine 303 (proton acceptor) is an active-site residue. Position 303–304 (303–304) interacts with carbamoyl phosphate; it reads CL. An N6-acetyllysine; alternate modification is found at lysine 307. Lysine 307 is modified (N6-succinyllysine; alternate). Arginine 330 contacts carbamoyl phosphate.

Belongs to the aspartate/ornithine carbamoyltransferase superfamily. OTCase family. As to quaternary structure, homotrimer. Acetylation at Lys-88 negatively regulates ornithine carbamoyltransferase activity in response to nutrient signals. Mainly expressed in liver and intestinal mucosa.

The protein resides in the mitochondrion matrix. It carries out the reaction carbamoyl phosphate + L-ornithine = L-citrulline + phosphate + H(+). It functions in the pathway nitrogen metabolism; urea cycle; L-citrulline from L-ornithine and carbamoyl phosphate: step 1/1. With respect to regulation, negatively regulated by lysine acetylation. Catalyzes the second step of the urea cycle, the condensation of carbamoyl phosphate with L-ornithine to form L-citrulline. The urea cycle ensures the detoxification of ammonia by converting it to urea for excretion. This Homo sapiens (Human) protein is Ornithine transcarbamylase, mitochondrial.